A 316-amino-acid polypeptide reads, in one-letter code: D-alanine--D-alanine ligase (316 aa).

An ATP-grasp domain is found at 112 to 310; that stretch reads KTALKAHGLP…FGKLCRWLVE (199 aa). 139–189 is an ATP binding site; sequence MATPYVVKPNNEGSSVGVYLVNEAANGPPHLSDDMPDEVMVETYAPGRELT. Residues Asp-261, Glu-277, and Asn-279 each coordinate Mg(2+).

Belongs to the D-alanine--D-alanine ligase family. The cofactor is Mg(2+). Requires Mn(2+) as cofactor.

The protein resides in the cytoplasm. The catalysed reaction is 2 D-alanine + ATP = D-alanyl-D-alanine + ADP + phosphate + H(+). Its pathway is cell wall biogenesis; peptidoglycan biosynthesis. Cell wall formation. The sequence is that of D-alanine--D-alanine ligase from Jannaschia sp. (strain CCS1).